Here is a 256-residue protein sequence, read N- to C-terminus: MATLISLNDANRMLIAESQEDFLQIACYDWISTANKAIQKRGAFYVALSGGKTPLQIFQEIVKKRAAISDCSKIFVFWGDERASEDTEAGSNYLKAMDILKWLRIPDTQIFRMDTANPKGDEIYENLIREHVPDTIFDMVMLGVGEDGHTLSLFPGTAALEEKDRLVVFNEVPQLQTRRMTLTFPIVRQARHLVAYIQGTAKQDLCHKLLHPLGRDTFPIERVGTPLNPLQWVLSSDCCRAADLADIPAECKLEMF.

It belongs to the glucosamine/galactosamine-6-phosphate isomerase family. 6-phosphogluconolactonase subfamily.

It carries out the reaction 6-phospho-D-glucono-1,5-lactone + H2O = 6-phospho-D-gluconate + H(+). Its pathway is carbohydrate degradation; pentose phosphate pathway; D-ribulose 5-phosphate from D-glucose 6-phosphate (oxidative stage): step 2/3. In terms of biological role, hydrolysis of 6-phosphogluconolactone to 6-phosphogluconate. The chain is 6-phosphogluconolactonase (pgl) from Chlamydia muridarum (strain MoPn / Nigg).